A 122-amino-acid polypeptide reads, in one-letter code: Aspartate 1-decarboxylase (122 aa).

The active-site Schiff-base intermediate with substrate; via pyruvic acid is S25. A Pyruvic acid (Ser) modification is found at S25. Position 57 (T57) interacts with substrate. Y58 serves as the catalytic Proton donor. G73–A75 contacts substrate.

It belongs to the PanD family. As to quaternary structure, heterooctamer of four alpha and four beta subunits. Pyruvate serves as cofactor. Post-translationally, is synthesized initially as an inactive proenzyme, which is activated by self-cleavage at a specific serine bond to produce a beta-subunit with a hydroxyl group at its C-terminus and an alpha-subunit with a pyruvoyl group at its N-terminus.

Its subcellular location is the cytoplasm. The enzyme catalyses L-aspartate + H(+) = beta-alanine + CO2. The protein operates within cofactor biosynthesis; (R)-pantothenate biosynthesis; beta-alanine from L-aspartate: step 1/1. Catalyzes the pyruvoyl-dependent decarboxylation of aspartate to produce beta-alanine. This Bordetella pertussis (strain Tohama I / ATCC BAA-589 / NCTC 13251) protein is Aspartate 1-decarboxylase.